Consider the following 428-residue polypeptide: uncharacterized protein (428 aa).

Helical transmembrane passes span 26–46 (VALT…DDVF), 51–71 (AGID…VSVL), 90–110 (AAPL…SALL), 135–155 (TPFL…TLVG), 177–197 (MAPA…WLLG), 223–243 (LLIK…AHPV), 278–298 (TLLF…TGVV), 314–334 (LLTV…IDNI), 359–379 (TFWW…AVAA), and 407–427 (VVTA…YFVF).

It belongs to the CitM (TC 2.A.11) transporter family.

It is found in the cell membrane. This is an uncharacterized protein from Mycobacterium tuberculosis (strain CDC 1551 / Oshkosh).